The chain runs to 341 residues: Phenylalanine--tRNA ligase alpha subunit (341 aa).

A Mg(2+)-binding site is contributed by Glu256.

Belongs to the class-II aminoacyl-tRNA synthetase family. Phe-tRNA synthetase alpha subunit type 1 subfamily. In terms of assembly, tetramer of two alpha and two beta subunits. Mg(2+) is required as a cofactor.

The protein resides in the cytoplasm. The enzyme catalyses tRNA(Phe) + L-phenylalanine + ATP = L-phenylalanyl-tRNA(Phe) + AMP + diphosphate + H(+). The polypeptide is Phenylalanine--tRNA ligase alpha subunit (Chlamydia abortus (strain DSM 27085 / S26/3) (Chlamydophila abortus)).